A 111-amino-acid polypeptide reads, in one-letter code: SPbeta prophage-derived uncharacterized protein YopW (111 aa).

The polypeptide is SPbeta prophage-derived uncharacterized protein YopW (yopW) (Bacillus subtilis (strain 168)).